The chain runs to 547 residues: Glucose-6-phosphate isomerase (547 aa).

Residue Glu351 is the Proton donor of the active site. Active-site residues include His382 and Lys509.

It belongs to the GPI family.

The protein resides in the cytoplasm. The catalysed reaction is alpha-D-glucose 6-phosphate = beta-D-fructose 6-phosphate. The protein operates within carbohydrate biosynthesis; gluconeogenesis. It participates in carbohydrate degradation; glycolysis; D-glyceraldehyde 3-phosphate and glycerone phosphate from D-glucose: step 2/4. Functionally, catalyzes the reversible isomerization of glucose-6-phosphate to fructose-6-phosphate. This Coxiella burnetii (strain RSA 493 / Nine Mile phase I) protein is Glucose-6-phosphate isomerase.